The primary structure comprises 260 residues: FAS1 domain-containing protein SELMODRAFT_448915 (260 aa).

Over 1 to 35 (MRRTGRSYKPLLSQLKDHHIPVHPSSRAERAMESR) the chain is Cytoplasmic. Residues 36-58 (TLLVLLFVGVVTIVSSGLERAAA) form a helical membrane-spanning segment. The FAS1 domain maps to 59 to 198 (QDDTDDGILP…IACHGIDRVL (140 aa)). Residues 59 to 260 (QDDTDDGILP…SSASRYPVSE (202 aa)) are Extracellular-facing. N-linked (GlcNAc...) asparagine glycans are attached at residues Asn-118, Asn-169, Asn-176, Asn-201, Asn-236, and Asn-247. Residues 210–260 (PEASPPFGAEQASPAPEALPPGTRSPNNTANPSNRKSNSTRSSASRYPVSE) form a disordered region. Residues 233–254 (RSPNNTANPSNRKSNSTRSSAS) show a composition bias toward polar residues.

Its subcellular location is the membrane. In Selaginella moellendorffii (Spikemoss), this protein is FAS1 domain-containing protein SELMODRAFT_448915.